A 290-amino-acid polypeptide reads, in one-letter code: 4-hydroxybenzoate octaprenyltransferase (290 aa).

The next 6 helical transmembrane spans lie at 38 to 58 (LAGMAIPALGTLTVFILGVFF), 99 to 119 (LFGALVGISFALVLTLNSMTI), 141 to 161 (LPQLVLGAAFGWSIPMVFTAV), 213 to 233 (LIIGLLQLATLLLLGVIGWQL), 238 to 258 (IYYLALAGAAGLFLWQQKLIV), and 268 to 288 (AFLNNNLVGMLIFVGILLSLL).

Belongs to the UbiA prenyltransferase family. Requires Mg(2+) as cofactor.

It localises to the cell inner membrane. It carries out the reaction all-trans-octaprenyl diphosphate + 4-hydroxybenzoate = 4-hydroxy-3-(all-trans-octaprenyl)benzoate + diphosphate. Its pathway is cofactor biosynthesis; ubiquinone biosynthesis. Its function is as follows. Catalyzes the prenylation of para-hydroxybenzoate (PHB) with an all-trans polyprenyl group. Mediates the second step in the final reaction sequence of ubiquinone-8 (UQ-8) biosynthesis, which is the condensation of the polyisoprenoid side chain with PHB, generating the first membrane-bound Q intermediate 3-octaprenyl-4-hydroxybenzoate. This is 4-hydroxybenzoate octaprenyltransferase from Sodalis glossinidius (strain morsitans).